The primary structure comprises 1007 residues: A disintegrin and metalloproteinase with thrombospondin motifs 1 (1007 aa).

The signal sequence occupies residues Met-1–Ala-20. Asn-130 and Asn-228 each carry an N-linked (GlcNAc...) asparagine glycan. A Peptidase M12B domain is found at Leu-184 to His-370. A Zn(2+)-binding site is contributed by His-322. The Metal-binding motif lies at His-322 to Asp-333. Glu-323 is a catalytic residue. Zn(2+) contacts are provided by His-326 and His-332. Intrachain disulfides connect Cys-338-Cys-364, Cys-494-Cys-530, Cys-498-Cys-536, and Cys-509-Cys-520. The TSP type-1 1 domain maps to Thr-482–Ala-537. Asn-561, Asn-610, Asn-626, Asn-737, Asn-777, and Asn-865 each carry an N-linked (GlcNAc...) asparagine glycan. TSP type-1 domains follow at residues Cys-833–Pro-899 and Cys-900–Pro-952. 3 disulfides stabilise this stretch: Cys-912–Cys-946, Cys-916–Cys-951, and Cys-927–Cys-935.

Zn(2+) is required as a cofactor.

The protein resides in the secreted. The protein localises to the extracellular space. It localises to the extracellular matrix. Functionally, involved in larval molting and metamorphosis. May degrade extracellular matrix (ECM) and basement membrane (BM) during the development of organs to allow degeneration and remodeling of tissues. The protein is A disintegrin and metalloproteinase with thrombospondin motifs 1 of Bombyx mori (Silk moth).